The sequence spans 410 residues: Translation initiation factor 2 subunit gamma (410 aa).

The region spanning 9–202 is the tr-type G domain; sequence QAEVNIGMVG…AIEEFIPTPE (194 aa). Positions 18–25 are G1; that stretch reads GHVDHGKT. The Mg(2+) site is built by Asp21, Thr25, Gly46, and Thr48. GTP is bound at residue 21–26; the sequence is DHGKTT. A G2 region spans residues 46-50; that stretch reads GITIK. Zn(2+) is bound by residues Cys61, Cys64, Cys73, and Cys76. A G3 region spans residues 90–93; it reads DAPG. GTP contacts are provided by residues 145-148 and 180-182; these read NKIE and SAL. The interval 145 to 148 is G4; sequence NKIE. Positions 180–182 are G5; the sequence is SAL.

Belongs to the TRAFAC class translation factor GTPase superfamily. Classic translation factor GTPase family. EIF2G subfamily. In terms of assembly, heterotrimer composed of an alpha, a beta and a gamma chain. It depends on Mg(2+) as a cofactor.

It catalyses the reaction GTP + H2O = GDP + phosphate + H(+). In terms of biological role, eIF-2 functions in the early steps of protein synthesis by forming a ternary complex with GTP and initiator tRNA. The polypeptide is Translation initiation factor 2 subunit gamma (Thermococcus onnurineus (strain NA1)).